Consider the following 149-residue polypeptide: Urease accessory protein UreE (149 aa).

It belongs to the UreE family.

It is found in the cytoplasm. Functionally, involved in urease metallocenter assembly. Binds nickel. Probably functions as a nickel donor during metallocenter assembly. In Ureaplasma urealyticum serovar 10 (strain ATCC 33699 / Western), this protein is Urease accessory protein UreE.